Consider the following 265-residue polypeptide: Proline-rich protein 23B (265 aa).

A compositionally biased stretch (low complexity) spans 1–18 (MVSRPRSPSAFPAPWWGQ). Disordered regions lie at residues 1–49 (MVSR…EDPA) and 226–265 (PSSP…LFQA). Pro residues predominate over residues 226–237 (PSSPLQPLPPSP). Over residues 256-265 (CKARRRLFQA) the composition is skewed to basic residues.

It belongs to the PRR23 family.

The protein is Proline-rich protein 23B (PRR23B) of Homo sapiens (Human).